Here is a 142-residue protein sequence, read N- to C-terminus: Putative regulator of rDNA transcription protein 16 (142 aa).

Helical transmembrane passes span 19–39 (ILLT…VMVA), 84–104 (FLLF…AIFL), and 111–131 (SIFI…GLCH).

It is found in the membrane. Functionally, identified in a screen for mutants with decreased levels of rDNA transcription. The protein is Putative regulator of rDNA transcription protein 16 (RRT16) of Saccharomyces cerevisiae (strain ATCC 204508 / S288c) (Baker's yeast).